Consider the following 448-residue polypeptide: tRNA methyltransferase 10 homolog C (448 aa).

A mitochondrion-targeting transit peptide spans 1–48 (MAFVNTLLRTIRCSAVHTLVQEGRSLSLLKASHQLTQSRKIMLSNHVR). Residues 137–165 (REVMKTNRKEKKKELKESKSKIESLDQLE) adopt a coiled-coil conformation. Residues 144–167 (RKEKKKELKESKSKIESLDQLETK) form a disordered region. An SAM-dependent MTase TRM10-type domain is found at 190 to 382 (QRWKCVQAMK…SFVPNRKHDG (193 aa)). Positions 429-448 (ERTDDTSIRSTRKRWWEEEN) are disordered.

The protein belongs to the class IV-like SAM-binding methyltransferase superfamily. TRM10 family. As to quaternary structure, component of mitochondrial ribonuclease P. Interacts with HSD17B10/MRPP2.

Its subcellular location is the mitochondrion matrix. The protein localises to the mitochondrion nucleoid. It catalyses the reaction adenosine(9) in tRNA + S-adenosyl-L-methionine = N(1)-methyladenosine(9) in tRNA + S-adenosyl-L-homocysteine + H(+). It carries out the reaction guanosine(9) in tRNA + S-adenosyl-L-methionine = N(1)-methylguanosine(9) in tRNA + S-adenosyl-L-homocysteine + H(+). The enzyme catalyses an adenosine in mRNA + S-adenosyl-L-methionine = an N(1)-methyladenosine in mRNA + S-adenosyl-L-homocysteine + H(+). In terms of biological role, mitochondrial tRNA N(1)-methyltransferase involved in mitochondrial tRNA maturation. Component of mitochondrial ribonuclease P, which cleaves tRNA molecules in their 5'-ends. Together with hsd17b10/mrpp2, forms a subcomplex of the mitochondrial ribonuclease P, named MRPP1-MRPP2 subcomplex, which displays functions that are independent of the ribonuclease P activity. The MRPP1-MRPP2 subcomplex catalyzes the formation of N(1)-methylguanine and N(1)-methyladenine at position 9 (m1G9 and m1A9, respectively) in tRNAs; trmt10c/mrpp1 acting as the catalytic N(1)-methyltransferase subunit. The MRPP1-MRPP2 subcomplex also acts as a tRNA maturation platform: following 5'-end cleavage by the mitochondrial ribonuclease P complex, the MRPP1-MRPP2 subcomplex enhances the efficiency of 3'-processing catalyzed by ELAC2, retains the tRNA product after elac2 processing and presents the nascent tRNA to the mitochondrial CCA tRNA nucleotidyltransferase TRNT1 enzyme. In addition to tRNA N(1)-methyltransferase activity, trmt10c/mrpp1 also acts as a mRNA N(1)-methyltransferase by mediating methylation of adenosine residues at the N(1) position of MT-ND5 mRNA. The polypeptide is tRNA methyltransferase 10 homolog C (Xenopus tropicalis (Western clawed frog)).